The chain runs to 624 residues: Ubiquitin-associated and SH3 domain-containing protein A (624 aa).

Positions Arg19–His60 constitute a UBA domain. An SH3 domain is found at Val238 to Glu303. Positions Arg358 to Asn624 are phosphatase-like.

As to quaternary structure, homodimer or homooligomer. Interacts with CBL. Part of a complex containing CBL and activated EGFR. Interacts with ubiquitin and with mono-ubiquitinated proteins. Interacts with dynamin.

It localises to the cytoplasm. Its subcellular location is the nucleus. Interferes with CBL-mediated down-regulation and degradation of receptor-type tyrosine kinases. Promotes accumulation of activated target receptors, such as T-cell receptors, EGFR and PDGFRB, on the cell surface. May inhibit dynamin-dependent endocytic pathways by functionally sequestering dynamin via its SH3 domain. Exhibits negligible protein tyrosine phosphatase activity at neutral pH. May act as a dominant-negative regulator of UBASH3B-dependent dephosphorylation. This Mus musculus (Mouse) protein is Ubiquitin-associated and SH3 domain-containing protein A (Ubash3a).